Reading from the N-terminus, the 538-residue chain is Cryptic outer membrane porin BglH (538 aa).

A signal peptide spans 1-25 (MFRRNLITSAILLMAPLAFSAQSLA). The disordered stretch occupies residues 52 to 82 (KDEEKKKYTPATVNRSVSTNDQGYAANPFPT). A compositionally biased stretch (polar residues) spans 62–73 (ATVNRSVSTNDQ).

It belongs to the porin LamB (TC 1.B.3) family. As to quaternary structure, homomonomer; no physical evidence of a homotrimer has been found, however conductance experiments suggest it may be a homotrimer. The monomer probably consists of 18 antiparallel beta-strands.

The protein resides in the cell outer membrane. In terms of biological role, part of a cryptic operon that is poorly expressed in vivo. May be an ancestral sugar porin with a broad carbohydrate specificity; it binds aromatic beta-D-glucosides such as arbutin and salicin, but with low affinity compared to the binding of maltooligosaccharides to the LamB porin. This chain is Cryptic outer membrane porin BglH (bglH), found in Escherichia coli (strain K12).